The chain runs to 141 residues: Hydroperoxide reductase (141 aa).

The protein belongs to the OsmC/Ohr family. In terms of assembly, homodimer.

Its subcellular location is the cytoplasm. In terms of biological role, reduces organic and inorganic peroxide substrates. Protects the cell against oxidative stress. The chain is Hydroperoxide reductase from Mycoplasma pneumoniae (strain ATCC 29342 / M129 / Subtype 1) (Mycoplasmoides pneumoniae).